A 420-amino-acid polypeptide reads, in one-letter code: Ribosome biogenesis protein WDR12 homolog (420 aa).

The interval 10–92 (VQVHLKTKQE…EDAIEIEYVE (83 aa)) is ubiquitin-like (UBL) domain. WD repeat units follow at residues 104-142 (LHDDWVSAVKARGKWILSGCYDNSLNLWTNKGKHILTIS), 143-185 (GHTA…NAVD), 192-231 (GHERGVDSVSVSPDGLRFATGSWDTMLKVWSAELDDGVEG), 250-288 (GHRESVSAVQWMDATTLLTGSWDYTLKVWDLSLEGIKTE), 290-329 (STNKSIFDASYSKLNRLILTASADKNLRLYDPRTNQGSVV), 335-375 (GHNA…APLY), and 379-417 (GHGDKVLDIDWSNPKYIVSGGVDNSVRVFKSRKALAEDT).

This sequence belongs to the WD repeat WDR12/YTM1 family.

The protein resides in the nucleus. It localises to the nucleolus. Its subcellular location is the nucleoplasm. In terms of biological role, required for maturation of ribosomal RNAs and formation of the large ribosomal subunit. The protein is Ribosome biogenesis protein WDR12 homolog of Drosophila simulans (Fruit fly).